Consider the following 800-residue polypeptide: Nuclear poly(A) polymerase 2 (800 aa).

Residues 103 to 105, 115 to 118, aspartate 171, lysine 232, tyrosine 241, and 250 to 251 each bind ATP; these read FGS, ADID, and GV. The Mg(2+) site is built by aspartate 116, aspartate 118, and aspartate 171. 2 consecutive short sequence motifs (nuclear localization signal) follow at residues 487-494 and 533-540; these read RRRQLPSF and KRKNDDEI. The interval 497–576 is disordered; it reads PNGYKRSRQS…SGITTSGTPQ (80 aa). Over residues 527–538 the composition is skewed to basic and acidic residues; sequence SVERYAKRKNDD. Residues 564–575 are compositionally biased toward polar residues; that stretch reads PDSSGITTSGTP.

Belongs to the poly(A) polymerase family. As to quaternary structure, monomer. Forms a complex with cleavage and polyadenylation specificity factor (CPSF) subunits CPSF100, CPSF30, FIPS5 and PABN2. The cofactor is Mg(2+). Mn(2+) is required as a cofactor. Mostly expressed in flowers (highly in the style, receptacle and pedicel, but weakly in the vasculature of sepals) and hypocotyls, and, to a lower extent, in roots and stems. Barely detected in leaves (petioles and vascular system).

The protein resides in the nucleus. It localises to the cytoplasm. It carries out the reaction RNA(n) + ATP = RNA(n)-3'-adenine ribonucleotide + diphosphate. Its function is as follows. Essential protein. Polymerase that creates the 3'-poly(A) tail of mRNA's. Also required for the endoribonucleolytic cleavage reaction at some polyadenylation sites. May acquire specificity through interaction with a cleavage and polyadenylation specificity factor (CPSF) at its C-terminus. Mediates the polyadenylation of RNAs that are associated with polynucleotide phosphorylase (e.g. PNP1). This Arabidopsis thaliana (Mouse-ear cress) protein is Nuclear poly(A) polymerase 2.